The chain runs to 179 residues: Large ribosomal subunit protein uL5 (179 aa).

This sequence belongs to the universal ribosomal protein uL5 family. As to quaternary structure, part of the 50S ribosomal subunit; part of the 5S rRNA/L5/L18/L25 subcomplex. Contacts the 5S rRNA and the P site tRNA. Forms a bridge to the 30S subunit in the 70S ribosome.

In terms of biological role, this is one of the proteins that bind and probably mediate the attachment of the 5S RNA into the large ribosomal subunit, where it forms part of the central protuberance. In the 70S ribosome it contacts protein S13 of the 30S subunit (bridge B1b), connecting the 2 subunits; this bridge is implicated in subunit movement. Contacts the P site tRNA; the 5S rRNA and some of its associated proteins might help stabilize positioning of ribosome-bound tRNAs. In Verminephrobacter eiseniae (strain EF01-2), this protein is Large ribosomal subunit protein uL5.